The chain runs to 547 residues: Chaperonin GroEL (547 aa).

Residues 30–33, K51, 87–91, G415, and D496 each bind ATP; these read TLGP and DGTTT.

This sequence belongs to the chaperonin (HSP60) family. In terms of assembly, forms a cylinder of 14 subunits composed of two heptameric rings stacked back-to-back. Interacts with the co-chaperonin GroES.

The protein localises to the cytoplasm. It carries out the reaction ATP + H2O + a folded polypeptide = ADP + phosphate + an unfolded polypeptide.. Its function is as follows. Together with its co-chaperonin GroES, plays an essential role in assisting protein folding. The GroEL-GroES system forms a nano-cage that allows encapsulation of the non-native substrate proteins and provides a physical environment optimized to promote and accelerate protein folding. In Chlorobium limicola (strain DSM 245 / NBRC 103803 / 6330), this protein is Chaperonin GroEL.